The chain runs to 511 residues: Bifunctional purine biosynthesis protein PurH (511 aa).

One can recognise an MGS-like domain in the interval 1-146 (MTKRALVSVS…KNHADVTVVV (146 aa)).

The protein belongs to the PurH family.

It catalyses the reaction (6R)-10-formyltetrahydrofolate + 5-amino-1-(5-phospho-beta-D-ribosyl)imidazole-4-carboxamide = 5-formamido-1-(5-phospho-D-ribosyl)imidazole-4-carboxamide + (6S)-5,6,7,8-tetrahydrofolate. The catalysed reaction is IMP + H2O = 5-formamido-1-(5-phospho-D-ribosyl)imidazole-4-carboxamide. It participates in purine metabolism; IMP biosynthesis via de novo pathway; 5-formamido-1-(5-phospho-D-ribosyl)imidazole-4-carboxamide from 5-amino-1-(5-phospho-D-ribosyl)imidazole-4-carboxamide (10-formyl THF route): step 1/1. It functions in the pathway purine metabolism; IMP biosynthesis via de novo pathway; IMP from 5-formamido-1-(5-phospho-D-ribosyl)imidazole-4-carboxamide: step 1/1. The protein is Bifunctional purine biosynthesis protein PurH of Shouchella clausii (strain KSM-K16) (Alkalihalobacillus clausii).